A 366-amino-acid chain; its full sequence is S-adenosylmethionine decarboxylase proenzyme 1 (366 aa).

Active-site residues include Glu-9 and Glu-12. Glu-68 contacts substrate. The Schiff-base intermediate with substrate; via pyruvic acid role is filled by Ser-69. The residue at position 69 (Ser-69) is a Pyruvic acid (Ser); by autocatalysis. Catalysis depends on Cys-83, which acts as the Proton donor; for catalytic activity. Residues Ser-233 and His-246 each act as proton acceptor; for processing activity in the active site. Substrate is bound at residue Glu-250.

It belongs to the eukaryotic AdoMetDC family. Requires pyruvate as cofactor. In terms of processing, is synthesized initially as an inactive proenzyme. Formation of the active enzyme involves a self-maturation process in which the active site pyruvoyl group is generated from an internal serine residue via an autocatalytic post-translational modification. Two non-identical subunits are generated from the proenzyme in this reaction, and the pyruvate is formed at the N-terminus of the alpha chain, which is derived from the carboxyl end of the proenzyme. The post-translation cleavage follows an unusual pathway, termed non-hydrolytic serinolysis, in which the side chain hydroxyl group of the serine supplies its oxygen atom to form the C-terminus of the beta chain, while the remainder of the serine residue undergoes an oxidative deamination to produce ammonia and the pyruvoyl group blocking the N-terminus of the alpha chain.

It carries out the reaction S-adenosyl-L-methionine + H(+) = S-adenosyl 3-(methylsulfanyl)propylamine + CO2. It participates in amine and polyamine biosynthesis; S-adenosylmethioninamine biosynthesis; S-adenosylmethioninamine from S-adenosyl-L-methionine: step 1/1. Essential for biosynthesis of the polyamines spermidine and spermine. Essential for polyamine homeostasis, and normal plant embryogenesis, growth and development. In Arabidopsis thaliana (Mouse-ear cress), this protein is S-adenosylmethionine decarboxylase proenzyme 1.